Consider the following 272-residue polypeptide: Aquaporin-11 (272 aa).

The Cytoplasmic segment spans residues 1 to 14 (MTALRALWSEMQDT). The helical transmembrane segment at 15-35 (CTSLGLMLSVVLLAGLARVVA) threads the bilayer. Over 36-47 (RQQQLHRPMAHA) the chain is Lumenal. A helical membrane pass occupies residues 48–68 (FVLEFLATLQLCCCTHELLLL). Topologically, residues 69–75 (SEQEPAH) are cytoplasmic. The helical transmembrane segment at 76–96 (PTWPLTLIYFFTLVHGLTLVG) threads the bilayer. The Lumenal segment spans residues 97–167 (TSSNPCGVMM…NPIQVDLPKA (71 aa)). The NPC motif lies at 100 to 102 (NPC). A helical transmembrane segment spans residues 168-188 (VIVEALCSFIFHSALLNFQEV). Topologically, residues 189–195 (RPKLRIH) are cytoplasmic. Residues 196-216 (LLAALITFLVYAGGSLTGAVF) form a helical membrane-spanning segment. Residues 217–219 (NPA) carry the NPA motif. Topologically, residues 217 to 235 (NPALALSLHFKCFDEAFLQ) are lumenal. Residues 236-256 (FFIVYWLAPSLGILLMILMFS) form a helical membrane-spanning segment. Over 257 to 272 (FFLPWLYNNHTINKKE) the chain is Cytoplasmic.

Belongs to the MIP/aquaporin (TC 1.A.8) family. AQP11/AQP12 subfamily. Homodimer; disulfide-linked. Homotetramer. Can also form homomultimer. Not glycosylated. In terms of tissue distribution, expressed in retina specifically at retinal Mueller glial cells.

It is found in the endoplasmic reticulum membrane. It localises to the cytoplasmic vesicle membrane. Its subcellular location is the cell membrane. The enzyme catalyses H2O(in) = H2O(out). It catalyses the reaction glycerol(in) = glycerol(out). It carries out the reaction H2O2(out) = H2O2(in). Functionally, channel protein that facilitates the transport of water, glycerol and hydrogen peroxide across membrane of cell or organelles guaranteeing intracellular homeostasis in several organes like liver, kidney and brain. In situation of stress, participates in endoplasmic reticulum (ER) homeostasis by regulating redox homeostasis through the transport of hydrogen peroxide across the endoplasmic reticulum membrane thereby regulating the oxidative stress through the NADPH oxidase 2 pathway. Plays a role by maintaining an environment suitable for translation or protein foldings in the ER lumen namely by participating in the PKD1 glycosylation processing resulting in regulation of PKD1 membrane trafficking thereby preventing the accumulation of unfolding protein in ER. Plays a role in the proximal tubule function by regulating its endosomal acidification. May play a role in postnatal kidney development. This is Aquaporin-11 from Equus caballus (Horse).